The sequence spans 711 residues: Polyribonucleotide nucleotidyltransferase (711 aa).

The Mg(2+) site is built by aspartate 486 and aspartate 492. Residues 553-612 (PRIHTIKISTDKIKDVIGKGGSVIRALTEETGTTIEIEDDGTVKIAATDGEKAKYAIRRI) form the KH domain. Positions 622–690 (GRIYNGKVTR…RQGRVRLSIK (69 aa)) constitute an S1 motif domain. Positions 690–711 (KEATEQSQPAAAPEAPASEQAE) are disordered. Low complexity predominate over residues 694–711 (EQSQPAAAPEAPASEQAE).

Belongs to the polyribonucleotide nucleotidyltransferase family. In terms of assembly, component of the RNA degradosome, which is a multiprotein complex involved in RNA processing and mRNA degradation. It depends on Mg(2+) as a cofactor.

The protein localises to the cytoplasm. The enzyme catalyses RNA(n+1) + phosphate = RNA(n) + a ribonucleoside 5'-diphosphate. Involved in mRNA degradation. Catalyzes the phosphorolysis of single-stranded polyribonucleotides processively in the 3'- to 5'-direction. The sequence is that of Polyribonucleotide nucleotidyltransferase from Salmonella choleraesuis (strain SC-B67).